Here is a 124-residue protein sequence, read N- to C-terminus: Small ribosomal subunit protein uS12 (124 aa).

Asp-89 is subject to 3-methylthioaspartic acid.

This sequence belongs to the universal ribosomal protein uS12 family. In terms of assembly, part of the 30S ribosomal subunit. Contacts proteins S8 and S17. May interact with IF1 in the 30S initiation complex.

With S4 and S5 plays an important role in translational accuracy. Functionally, interacts with and stabilizes bases of the 16S rRNA that are involved in tRNA selection in the A site and with the mRNA backbone. Located at the interface of the 30S and 50S subunits, it traverses the body of the 30S subunit contacting proteins on the other side and probably holding the rRNA structure together. The combined cluster of proteins S8, S12 and S17 appears to hold together the shoulder and platform of the 30S subunit. The protein is Small ribosomal subunit protein uS12 of Shewanella piezotolerans (strain WP3 / JCM 13877).